Here is a 244-residue protein sequence, read N- to C-terminus: tRNA (guanine-N(1)-)-methyltransferase (244 aa).

Residues G123 and 143 to 148 contribute to the S-adenosyl-L-methionine site; that span reads LGDFVM.

It belongs to the RNA methyltransferase TrmD family. In terms of assembly, homodimer.

It is found in the cytoplasm. The enzyme catalyses guanosine(37) in tRNA + S-adenosyl-L-methionine = N(1)-methylguanosine(37) in tRNA + S-adenosyl-L-homocysteine + H(+). Specifically methylates guanosine-37 in various tRNAs. The sequence is that of tRNA (guanine-N(1)-)-methyltransferase from Ruegeria sp. (strain TM1040) (Silicibacter sp.).